The following is a 231-amino-acid chain: NADH-ubiquinone oxidoreductase chain 4 (231 aa).

Helical transmembrane passes span 1 to 21 (PIAGSMVLAAILLKLGGYGII), 34 to 54 (MFLPFIVLALWGAILANLTCL), 63 to 85 (IAYSSISHMGLVVAAIIIQTPWG), 89 to 111 (AMALMIAHGFTSSALFCLANTTY), 128 to 148 (ILPMATTWWLLTNLMNIAIPP), 156 to 176 (LLIMSALFNWCPTTIIMLGLS), and 211 to 231 (LLMILHLIPLMMISMKPELII).

It belongs to the complex I subunit 4 family.

It is found in the mitochondrion membrane. It carries out the reaction a ubiquinone + NADH + 5 H(+)(in) = a ubiquinol + NAD(+) + 4 H(+)(out). Its function is as follows. Core subunit of the mitochondrial membrane respiratory chain NADH dehydrogenase (Complex I) that is believed to belong to the minimal assembly required for catalysis. Complex I functions in the transfer of electrons from NADH to the respiratory chain. The immediate electron acceptor for the enzyme is believed to be ubiquinone. This is NADH-ubiquinone oxidoreductase chain 4 (MT-ND4) from Agkistrodon piscivorus piscivorus (Eastern cottonmouth).